The chain runs to 358 residues: Holliday junction branch migration complex subunit RuvB (358 aa).

The tract at residues 1–24 (MSIQTDDFAAPPPKRILSGAPASP) is disordered. Residues 5–194 (TDDFAAPPPK…FGIVARLEFY (190 aa)) are large ATPase domain (RuvB-L). ATP contacts are provided by residues L33, R34, G75, K78, T79, T80, 141–143 (EDY), R184, Y194, and R231. T79 lines the Mg(2+) pocket. The interval 195–265 (SPEELASIVR…IAHRALVMLD (71 aa)) is small ATPAse domain (RuvB-S). Residues 268 to 358 (PQGFDLMDRK…GDMFGAMRPE (91 aa)) form a head domain (RuvB-H) region. 3 residues coordinate DNA: R304, R323, and R328.

Belongs to the RuvB family. In terms of assembly, homohexamer. Forms an RuvA(8)-RuvB(12)-Holliday junction (HJ) complex. HJ DNA is sandwiched between 2 RuvA tetramers; dsDNA enters through RuvA and exits via RuvB. An RuvB hexamer assembles on each DNA strand where it exits the tetramer. Each RuvB hexamer is contacted by two RuvA subunits (via domain III) on 2 adjacent RuvB subunits; this complex drives branch migration. In the full resolvosome a probable DNA-RuvA(4)-RuvB(12)-RuvC(2) complex forms which resolves the HJ.

It is found in the cytoplasm. It catalyses the reaction ATP + H2O = ADP + phosphate + H(+). Functionally, the RuvA-RuvB-RuvC complex processes Holliday junction (HJ) DNA during genetic recombination and DNA repair, while the RuvA-RuvB complex plays an important role in the rescue of blocked DNA replication forks via replication fork reversal (RFR). RuvA specifically binds to HJ cruciform DNA, conferring on it an open structure. The RuvB hexamer acts as an ATP-dependent pump, pulling dsDNA into and through the RuvAB complex. RuvB forms 2 homohexamers on either side of HJ DNA bound by 1 or 2 RuvA tetramers; 4 subunits per hexamer contact DNA at a time. Coordinated motions by a converter formed by DNA-disengaged RuvB subunits stimulates ATP hydrolysis and nucleotide exchange. Immobilization of the converter enables RuvB to convert the ATP-contained energy into a lever motion, pulling 2 nucleotides of DNA out of the RuvA tetramer per ATP hydrolyzed, thus driving DNA branch migration. The RuvB motors rotate together with the DNA substrate, which together with the progressing nucleotide cycle form the mechanistic basis for DNA recombination by continuous HJ branch migration. Branch migration allows RuvC to scan DNA until it finds its consensus sequence, where it cleaves and resolves cruciform DNA. The protein is Holliday junction branch migration complex subunit RuvB of Albidiferax ferrireducens (strain ATCC BAA-621 / DSM 15236 / T118) (Rhodoferax ferrireducens).